Here is an 840-residue protein sequence, read N- to C-terminus: Heat shock 70 kDa protein 4 (840 aa).

N6-acetyllysine is present on Lys53. Ser76 bears the Phosphoserine mark. A phosphotyrosine mark is found at Tyr89 and Tyr336. 2 positions are modified to phosphoserine: Ser393 and Ser415. Lys430 is modified (N6-acetyllysine). The segment at 500 to 575 (VHKSEENEEP…QAKKAKVKTS (76 aa)) is disordered. The segment covering 514–533 (QNAKEEEKMQVDQEEPHVEE) has biased composition (basic and acidic residues). Thr538 carries the post-translational modification Phosphothreonine. A phosphoserine mark is found at Ser546 and Ser647. Tyr660 is modified (phosphotyrosine). Lys679 bears the N6-acetyllysine mark. Phosphoserine is present on Ser756. At Lys773 the chain carries N6-methyllysine. Positions 779–840 (CSPIISKPKP…DKKLPEMDID (62 aa)) are disordered. Basic and acidic residues-rich tracts occupy residues 788–799 (PKVEPPKEEQKN) and 829–840 (DSDKKLPEMDID).

Belongs to the heat shock protein 70 family. Interacts with TJP1/ZO-1.

Its subcellular location is the cytoplasm. The sequence is that of Heat shock 70 kDa protein 4 (HSPA4) from Homo sapiens (Human).